Reading from the N-terminus, the 646-residue chain is MGNIKELQTSLANKIAAGEVVERPGSVVKELLENALDAKATEINIEIKQSGIESIRVVDNGTGIEEDDLKLVFHRHATSKLHEDSDLFHIRTLGFRGEALASISSVAKVTLRTCTDGQSGHEIYAEDGAILEQKPAKAKKGTDILVESLFYNTPARLKYVKSLYTELGKITDIVNRMAMSHPNVRFTLTSDDKVLIKTNGSGRTNEVMAEIYGMKVAKDLVHITGDTSDYHLEGYVAKPEHSRSNRHYISIFINGRYIKNFVLNKAIVEGYHTLLTIGRYPICYINIEMDPILVDVNVHPTKLEVRLSKEEQLYQLIVQKIQEAFKDKILIPHNDENKLYKKNKVLDVFEQQKLDFENRTASNPPAEKPDEETDRVNENSDTQAFQTNEQTSENGSDASYQAGQRAVLQDLEGNTKNSEGLFDSEATSNEAASAEIESSEDDVRETEHAKPHRRVPYMEVVGQVHGTYIIAQNETGMFMIDQHAAQERIKYEYFRDKIGEVTNEVQNLLIPMTFHFSKDEQMIINQYKDELDKVGVHLEPFGSHDYIVNSYPVWFPKEEAQEIIQDMVEYVLEHRKVDIKKIREEAAIMMSCKKSIKANHYLRNHEMADLIDQLREMEDPFTCPHGRPIIISFSNYELERLFKRIM.

Disordered stretches follow at residues 356–380 (FENRTASNPPAEKPDEETDRVNENS) and 415–452 (TKNSEGLFDSEATSNEAASAEIESSEDDVRETEHAKPH). A compositionally biased stretch (low complexity) spans 424–436 (SEATSNEAASAEI).

This sequence belongs to the DNA mismatch repair MutL/HexB family.

This protein is involved in the repair of mismatches in DNA. It is required for dam-dependent methyl-directed DNA mismatch repair. May act as a 'molecular matchmaker', a protein that promotes the formation of a stable complex between two or more DNA-binding proteins in an ATP-dependent manner without itself being part of a final effector complex. The chain is DNA mismatch repair protein MutL from Staphylococcus carnosus (strain TM300).